An 858-amino-acid chain; its full sequence is Protein VACUOLELESS1 (858 aa).

It belongs to the VPS16 family. As to quaternary structure, core component of at least two putative endosomal tethering complexes, the homotypic fusion and vacuole protein sorting (HOPS) complex and the class C core vacuole/endosome tethering (CORVET) complex. Their common core is composed of the class C Vps proteins VPS11, VCL1, VPS18 and VPS33, which in HOPS further associates with VPS39 and VPS41 and in CORVET with VPS3. As to expression, expressed in roots, leaves, stems, siliques, flowers and mature pollen.

The protein localises to the vacuole membrane. Its subcellular location is the prevacuolar compartment membrane. Its function is as follows. Required for vacuole biogenesis and vacuole enlargment in dividing and expanding cells. Involved in the docking or fusion of prevacuolar vesicles. Important for the function of both male and female gametophytes, but is not essential for the germination and development of pollen. In Arabidopsis thaliana (Mouse-ear cress), this protein is Protein VACUOLELESS1 (VCL1).